The primary structure comprises 164 residues: Phosphopantetheine adenylyltransferase (164 aa).

Ser9 is a substrate binding site. ATP-binding positions include Ser9 to Phe10 and His17. Positions 41, 73, and 87 each coordinate substrate. ATP contacts are provided by residues Gly88–Arg90, Glu98, and Tyr122–Ser128.

This sequence belongs to the bacterial CoaD family. In terms of assembly, homohexamer. Mg(2+) serves as cofactor.

It localises to the cytoplasm. It catalyses the reaction (R)-4'-phosphopantetheine + ATP + H(+) = 3'-dephospho-CoA + diphosphate. It participates in cofactor biosynthesis; coenzyme A biosynthesis; CoA from (R)-pantothenate: step 4/5. Its function is as follows. Reversibly transfers an adenylyl group from ATP to 4'-phosphopantetheine, yielding dephospho-CoA (dPCoA) and pyrophosphate. The sequence is that of Phosphopantetheine adenylyltransferase from Rhodococcus erythropolis (strain PR4 / NBRC 100887).